The primary structure comprises 367 residues: Large ribosomal subunit protein mL38 (367 aa).

Residues 1 to 29 (MLRRSIHTTKILQKPNATSHIWSDFTTRP) constitute a mitochondrion transit peptide.

Belongs to the phosphatidylethanolamine-binding protein family. Mitochondrion-specific ribosomal protein mL38 subfamily. As to quaternary structure, component of the mitochondrial large ribosomal subunit (mt-LSU). Mature yeast 74S mitochondrial ribosomes consist of a small (37S) and a large (54S) subunit. The 37S small subunit contains a 15S ribosomal RNA (15S mt-rRNA) and 34 different proteins. The 54S large subunit contains a 21S rRNA (21S mt-rRNA) and 46 different proteins.

It is found in the mitochondrion. Its function is as follows. Component of the mitochondrial ribosome (mitoribosome), a dedicated translation machinery responsible for the synthesis of mitochondrial genome-encoded proteins, including at least some of the essential transmembrane subunits of the mitochondrial respiratory chain. The mitoribosomes are attached to the mitochondrial inner membrane and translation products are cotranslationally integrated into the membrane. This chain is Large ribosomal subunit protein mL38 (MRPL35), found in Saccharomyces cerevisiae (strain ATCC 204508 / S288c) (Baker's yeast).